A 294-amino-acid polypeptide reads, in one-letter code: ATP phosphoribosyltransferase (294 aa).

It belongs to the ATP phosphoribosyltransferase family. Long subfamily. Mg(2+) is required as a cofactor.

It localises to the cytoplasm. It carries out the reaction 1-(5-phospho-beta-D-ribosyl)-ATP + diphosphate = 5-phospho-alpha-D-ribose 1-diphosphate + ATP. Its pathway is amino-acid biosynthesis; L-histidine biosynthesis; L-histidine from 5-phospho-alpha-D-ribose 1-diphosphate: step 1/9. Its activity is regulated as follows. Feedback inhibited by histidine. Functionally, catalyzes the condensation of ATP and 5-phosphoribose 1-diphosphate to form N'-(5'-phosphoribosyl)-ATP (PR-ATP). Has a crucial role in the pathway because the rate of histidine biosynthesis seems to be controlled primarily by regulation of HisG enzymatic activity. This Maricaulis maris (strain MCS10) (Caulobacter maris) protein is ATP phosphoribosyltransferase.